The following is a 315-amino-acid chain: Homoserine kinase (315 aa).

Residue 97–107 (PPARGLGSSAT) coordinates ATP.

It belongs to the GHMP kinase family. Homoserine kinase subfamily.

It is found in the cytoplasm. The enzyme catalyses L-homoserine + ATP = O-phospho-L-homoserine + ADP + H(+). It functions in the pathway amino-acid biosynthesis; L-threonine biosynthesis; L-threonine from L-aspartate: step 4/5. Functionally, catalyzes the ATP-dependent phosphorylation of L-homoserine to L-homoserine phosphate. The sequence is that of Homoserine kinase from Prochlorococcus marinus (strain SARG / CCMP1375 / SS120).